Consider the following 283-residue polypeptide: Pantothenate synthetase (283 aa).

30–37 (MGYLHEGH) serves as a coordination point for ATP. His37 (proton donor) is an active-site residue. Residue Gln61 coordinates (R)-pantoate. Gln61 is a binding site for beta-alanine. 147–150 (GLKD) is a binding site for ATP. Gln153 provides a ligand contact to (R)-pantoate. ATP contacts are provided by residues Val176 and 184–187 (KSSR).

It belongs to the pantothenate synthetase family. In terms of assembly, homodimer.

The protein resides in the cytoplasm. It catalyses the reaction (R)-pantoate + beta-alanine + ATP = (R)-pantothenate + AMP + diphosphate + H(+). It participates in cofactor biosynthesis; (R)-pantothenate biosynthesis; (R)-pantothenate from (R)-pantoate and beta-alanine: step 1/1. Its function is as follows. Catalyzes the condensation of pantoate with beta-alanine in an ATP-dependent reaction via a pantoyl-adenylate intermediate. The sequence is that of Pantothenate synthetase from Halalkalibacterium halodurans (strain ATCC BAA-125 / DSM 18197 / FERM 7344 / JCM 9153 / C-125) (Bacillus halodurans).